A 527-amino-acid polypeptide reads, in one-letter code: ATP synthase subunit alpha (527 aa).

169–176 (GDRQTGKT) is a binding site for ATP.

It belongs to the ATPase alpha/beta chains family. In terms of assembly, F-type ATPases have 2 components, CF(1) - the catalytic core - and CF(0) - the membrane proton channel. CF(1) has five subunits: alpha(3), beta(3), gamma(1), delta(1), epsilon(1). CF(0) has three main subunits: a(1), b(2) and c(9-12). The alpha and beta chains form an alternating ring which encloses part of the gamma chain. CF(1) is attached to CF(0) by a central stalk formed by the gamma and epsilon chains, while a peripheral stalk is formed by the delta and b chains.

It localises to the cell membrane. It carries out the reaction ATP + H2O + 4 H(+)(in) = ADP + phosphate + 5 H(+)(out). Functionally, produces ATP from ADP in the presence of a proton gradient across the membrane. The alpha chain is a regulatory subunit. In Metamycoplasma arthritidis (strain 158L3-1) (Mycoplasma arthritidis), this protein is ATP synthase subunit alpha.